The following is a 295-amino-acid chain: 3-methyl-2-oxobutanoate hydroxymethyltransferase (295 aa).

Mg(2+) is bound by residues Asp-53 and Asp-92. 3-methyl-2-oxobutanoate contacts are provided by residues 53–54 (DS), Asp-92, and Lys-122. Residue Glu-124 coordinates Mg(2+). Glu-191 functions as the Proton acceptor in the catalytic mechanism.

This sequence belongs to the PanB family. In terms of assembly, homodecamer; pentamer of dimers. It depends on Mg(2+) as a cofactor.

Its subcellular location is the cytoplasm. The catalysed reaction is 3-methyl-2-oxobutanoate + (6R)-5,10-methylene-5,6,7,8-tetrahydrofolate + H2O = 2-dehydropantoate + (6S)-5,6,7,8-tetrahydrofolate. Its pathway is cofactor biosynthesis; (R)-pantothenate biosynthesis; (R)-pantoate from 3-methyl-2-oxobutanoate: step 1/2. In terms of biological role, catalyzes the reversible reaction in which hydroxymethyl group from 5,10-methylenetetrahydrofolate is transferred onto alpha-ketoisovalerate to form ketopantoate. This is 3-methyl-2-oxobutanoate hydroxymethyltransferase from Koribacter versatilis (strain Ellin345).